The chain runs to 245 residues: Probable ABC transporter permease protein HI_0355 (245 aa).

6 helical membrane passes run 9-29 (LLIVGVLLMIWQMVATLGSFP), 61-81 (ICLGLLLGFLFGLISALLLSF), 92-112 (ILVISQAIPVFAIAPLLVLWF), 115-135 (GMASKIVMSVLIIYFPVTAAC), 170-190 (LPAFASGLRIAVSVAPIGAVV), and 217-237 (FAALLILVSISLCLYFSIDWL). Positions 50–234 (LWQHTQVTLL…SISLCLYFSI (185 aa)) constitute an ABC transmembrane type-1 domain.

The protein belongs to the binding-protein-dependent transport system permease family. CysTW subfamily.

The protein localises to the cell inner membrane. In terms of biological role, probably part of a binding-protein-dependent transport system. Probably responsible for the translocation of the substrate across the membrane. This chain is Probable ABC transporter permease protein HI_0355, found in Haemophilus influenzae (strain ATCC 51907 / DSM 11121 / KW20 / Rd).